Here is a 256-residue protein sequence, read N- to C-terminus: MSDVARILKEARDQGRLTALDFAKEIFDDFIELHGDRNFRDDGAVIGGIGRLNGQAVTVVGIQKGKNLQDNLNRNFGQPHPEGYRKALRLMKQAEKFGRPVVTFINTAGAYPGVGAEERGQGEAIARNLMEMSDLKVPIIAIIIGEGGSGGALALAVADKVWMLENTIYSILSPEGFATILWKDGSRSEEAAELMKITSGELLNMGIVDKVIPERGYFTSEIIEAIKTAIVDELAELSQLSTEDLLEARYQRFRKY.

The CoA carboxyltransferase C-terminal domain occupies 1 to 236 (MSDVARILKE…KTAIVDELAE (236 aa)).

The protein belongs to the AccA family. In terms of assembly, acetyl-CoA carboxylase is a heterohexamer composed of biotin carboxyl carrier protein (AccB), biotin carboxylase (AccC) and two subunits each of ACCase subunit alpha (AccA) and ACCase subunit beta (AccD).

Its subcellular location is the cytoplasm. It carries out the reaction N(6)-carboxybiotinyl-L-lysyl-[protein] + acetyl-CoA = N(6)-biotinyl-L-lysyl-[protein] + malonyl-CoA. The protein operates within lipid metabolism; malonyl-CoA biosynthesis; malonyl-CoA from acetyl-CoA: step 1/1. Functionally, component of the acetyl coenzyme A carboxylase (ACC) complex. First, biotin carboxylase catalyzes the carboxylation of biotin on its carrier protein (BCCP) and then the CO(2) group is transferred by the carboxyltransferase to acetyl-CoA to form malonyl-CoA. This is Acetyl-coenzyme A carboxylase carboxyl transferase subunit alpha from Streptococcus thermophilus (strain ATCC BAA-491 / LMD-9).